A 338-amino-acid polypeptide reads, in one-letter code: Ferrochelatase (338 aa).

Residues His210 and Glu291 each coordinate Fe cation.

It belongs to the ferrochelatase family.

It is found in the cytoplasm. The enzyme catalyses heme b + 2 H(+) = protoporphyrin IX + Fe(2+). It functions in the pathway porphyrin-containing compound metabolism; protoheme biosynthesis; protoheme from protoporphyrin-IX: step 1/1. Catalyzes the ferrous insertion into protoporphyrin IX. The polypeptide is Ferrochelatase (Helicobacter acinonychis (strain Sheeba)).